The chain runs to 222 residues: Vesicle transport v-SNARE 12 (222 aa).

The residue at position 2 (serine 2) is an N-acetylserine. Residues 2-199 are Cytoplasmic-facing; it reads SDVFEGYERQ…MSRRMTRNKW (198 aa). Positions 68–95 form a coiled coil; sequence KAVCLSKLREYKSDLNQLKKEFKRVSSA. Residues 200–220 form a helical; Anchor for type IV membrane protein membrane-spanning segment; it reads IITSVIVALVLAIILIISYKL. Over 221–222 the chain is Vesicular; it reads SH.

It belongs to the VTI1 family. In terms of assembly, forms SNARE complexes with the t-SNAREs SYP61 and either SYP41 or SYP42, and with a much lower affinity with SYP51 in the TGN. Also interacts with VPS45, a Sec1 protein, but not with SYP21 or SYP22. Binds to EPSIN2. Core constituent of the SNARE complex required for membrane fusion at the trans-Golgi network. Interacts with SCYL2B. Expressed in roots, stems, flowers and leaves.

It localises to the golgi apparatus. It is found in the trans-Golgi network membrane. The protein localises to the prevacuolar compartment membrane. Its subcellular location is the cell membrane. Its function is as follows. Together with either SYP41 or SYP61, required for membrane fusion; the fusion of phospholipid vesicles containing SYP41 or SYP61 and VTI12 is triggered by YKT61 and YKT62. Functions as a v-SNARE responsible for the docking or fusion of transport vesicles within the trans-Golgi network (TGN) and mediates liposome fusion. Necessary to deliver proteins to the protein storage vacuole (PSV). May be also involved in retrograde traffic to the cis-Golgi. This chain is Vesicle transport v-SNARE 12, found in Arabidopsis thaliana (Mouse-ear cress).